The following is a 269-amino-acid chain: Cytochrome c oxidase subunit 3 (269 aa).

A run of 7 helical transmembrane segments spans residues proline 21 to methionine 41, isoleucine 45 to tryptophan 65, glycine 90 to phenylalanine 110, proline 138 to valine 160, alanine 167 to isoleucine 187, phenylalanine 205 to isoleucine 225, and valine 247 to tryptophan 267.

It belongs to the cytochrome c oxidase subunit 3 family. As to quaternary structure, component of the cytochrome c oxidase (complex IV, CIV), a multisubunit enzyme composed of a catalytic core of 3 subunits and several supernumerary subunits. The complex exists as a monomer or a dimer and forms supercomplexes (SCs) in the inner mitochondrial membrane with ubiquinol-cytochrome c oxidoreductase (cytochrome b-c1 complex, complex III, CIII).

The protein resides in the mitochondrion inner membrane. It carries out the reaction 4 Fe(II)-[cytochrome c] + O2 + 8 H(+)(in) = 4 Fe(III)-[cytochrome c] + 2 H2O + 4 H(+)(out). Component of the cytochrome c oxidase, the last enzyme in the mitochondrial electron transport chain which drives oxidative phosphorylation. The respiratory chain contains 3 multisubunit complexes succinate dehydrogenase (complex II, CII), ubiquinol-cytochrome c oxidoreductase (cytochrome b-c1 complex, complex III, CIII) and cytochrome c oxidase (complex IV, CIV), that cooperate to transfer electrons derived from NADH and succinate to molecular oxygen, creating an electrochemical gradient over the inner membrane that drives transmembrane transport and the ATP synthase. Cytochrome c oxidase is the component of the respiratory chain that catalyzes the reduction of oxygen to water. Electrons originating from reduced cytochrome c in the intermembrane space (IMS) are transferred via the dinuclear copper A center (CU(A)) of subunit 2 and heme A of subunit 1 to the active site in subunit 1, a binuclear center (BNC) formed by heme A3 and copper B (CU(B)). The BNC reduces molecular oxygen to 2 water molecules using 4 electrons from cytochrome c in the IMS and 4 protons from the mitochondrial matrix. The protein is Cytochrome c oxidase subunit 3 (COX3) of Kluyveromyces lactis (strain ATCC 8585 / CBS 2359 / DSM 70799 / NBRC 1267 / NRRL Y-1140 / WM37) (Yeast).